We begin with the raw amino-acid sequence, 71 residues long: Large ribosomal subunit protein bL31 (71 aa).

Zn(2+)-binding residues include C16, C18, C37, and C40.

This sequence belongs to the bacterial ribosomal protein bL31 family. Type A subfamily. As to quaternary structure, part of the 50S ribosomal subunit. The cofactor is Zn(2+).

In terms of biological role, binds the 23S rRNA. The polypeptide is Large ribosomal subunit protein bL31 (Pseudomonas putida (strain W619)).